The sequence spans 218 residues: Ras-related protein RABA1i (218 aa).

20–27 lines the GTP pocket; the sequence is GDSGVGKS. Residues 42–50 carry the Effector region motif; that stretch reads SRATIGVEF. Residues 68–72, 126–129, and 156–157 contribute to the GTP site; these read DTAGQ, NKAD, and SA. 2 S-geranylgeranyl cysteine lipidation sites follow: C215 and C216.

The protein belongs to the small GTPase superfamily. Rab family.

The protein resides in the cell membrane. Its function is as follows. Intracellular vesicle trafficking and protein transport. The polypeptide is Ras-related protein RABA1i (RABA1I) (Arabidopsis thaliana (Mouse-ear cress)).